The sequence spans 332 residues: Tetraacyldisaccharide 4'-kinase (332 aa).

An ATP-binding site is contributed by 52 to 59; the sequence is TLGGAGKT.

It belongs to the LpxK family.

The enzyme catalyses a lipid A disaccharide + ATP = a lipid IVA + ADP + H(+). Its pathway is glycolipid biosynthesis; lipid IV(A) biosynthesis; lipid IV(A) from (3R)-3-hydroxytetradecanoyl-[acyl-carrier-protein] and UDP-N-acetyl-alpha-D-glucosamine: step 6/6. In terms of biological role, transfers the gamma-phosphate of ATP to the 4'-position of a tetraacyldisaccharide 1-phosphate intermediate (termed DS-1-P) to form tetraacyldisaccharide 1,4'-bis-phosphate (lipid IVA). The sequence is that of Tetraacyldisaccharide 4'-kinase from Methylobacterium sp. (strain 4-46).